The primary structure comprises 350 residues: Induced myeloid leukemia cell differentiation protein Mcl-1 (350 aa).

Residues K5 and K40 each participate in a glycyl lysine isopeptide (Lys-Gly) (interchain with G-Cter in ubiquitin) cross-link. Residues 47–87 (EIGGGEAGAVIGGSAGASPPSTLTPDSRRVARPPPIGAEVP) are disordered. The span at 50–61 (GGEAGAVIGGSA) shows a compositional bias: gly residues. The PEST-like stretch occupies residues 104–175 (RAAPLEEMEA…PAEEEEDELY (72 aa)). S121 is subject to Phosphoserine. Residue K136 forms a Glycyl lysine isopeptide (Lys-Gly) (interchain with G-Cter in ubiquitin) linkage. A disordered region spans residues 148 to 171 (GESGNNTSTDGSLPSTPPPAEEEE). The segment covering 150-161 (SGNNTSTDGSLP) has biased composition (polar residues). S159 is modified (phosphoserine; by GSK3-alpha and GSK3-beta). A Phosphoserine modification is found at S162. At T163 the chain carries Phosphothreonine; by MAPK. Glycyl lysine isopeptide (Lys-Gly) (interchain with G-Cter in ubiquitin) cross-links involve residues K194 and K197. Residues 209 to 223 (ALETLRRVGDGVQRN) carry the BH3 motif. Positions 252-272 (HVFSDGVTNWGRIVTLISFGA) match the BH1 motif. The BH2 motif lies at 304–319 (DWLVKQRGWDGFVEFF). A helical membrane pass occupies residues 328–348 (IRNVLLAFAGVAGVGAGLAYL).

It belongs to the Bcl-2 family. As to quaternary structure, interacts with HIF3A (via C-terminus domain). Interacts with BAD, BOK, BIK and BMF. Interacts with PMAIP1. Interacts with BBC3. Isoform 1 interacts with BAX, BAK1 and TPT1. Heterodimer of isoform 1 and isoform 2. Homodimers of isoform 1 or isoform 2 are not detected. Isoform 2 does not interact with pro-apoptotic BCL2-related proteins. Interacts with RTL10/BOP. Interacts with BCL2L11; may sequester BCL2L11 to prevent its pro-apoptotic activity. Interacts with GIMAP5 and HSPA8/HSC70; the interaction between HSPA8 and MCL1 is impaired in the absence of GIMAP5. Cleaved by CASP3 during apoptosis. In intact cells cleavage occurs preferentially after Asp-127, yielding a pro-apoptotic 28 kDa C-terminal fragment. In terms of processing, rapidly degraded in the absence of phosphorylation on Thr-163 in the PEST region. Post-translationally, phosphorylated on Ser-159, by GSK3, in response to IL3/interleukin-3 withdrawal. Phosphorylation at Ser-159 induces ubiquitination and proteasomal degradation, abrogating the anti-apoptotic activity. Treatment with taxol or okadaic acid induces phosphorylation on additional sites. Ubiquitinated. Ubiquitination is induced by phosphorylation at Ser-159. Deubiquitinated by USP20; leading to increased stability.

Its subcellular location is the membrane. It is found in the cytoplasm. The protein localises to the mitochondrion. It localises to the nucleus. The protein resides in the nucleoplasm. Functionally, involved in the regulation of apoptosis versus cell survival, and in the maintenance of viability but not of proliferation. Mediates its effects by interactions with a number of other regulators of apoptosis. Isoform 1 inhibits apoptosis. Isoform 2 promotes apoptosis. This chain is Induced myeloid leukemia cell differentiation protein Mcl-1 (MCL1), found in Homo sapiens (Human).